We begin with the raw amino-acid sequence, 657 residues long: Polycomb protein suz12-A (657 aa).

The interval 335 to 363 (TAPVAKPLATRNSESSTVDSSKTSNIKPP) is disordered. A compositionally biased stretch (low complexity) spans 347-358 (SESSTVDSSKTS). The C2H2-type zinc-finger motif lies at 413–436 (LHCPWCTLNCRKLYSLLKHLKLSH). The VEFS-box stretch occupies residues 528–604 (RLYFHSDSCT…NQMNQACMSF (77 aa)).

This sequence belongs to the VEFS (VRN2-EMF2-FIS2-SU(Z)12) family. Component of the prc2/eed-ezh2 complex.

It localises to the nucleus. Functionally, polycomb group (PcG) protein. Component of the prc2/eed-ezh2 complex, which methylates 'Lys-9' and 'Lys-27' of histone H3, leading to transcriptional repression of the affected target gene. This Danio rerio (Zebrafish) protein is Polycomb protein suz12-A (suz12a).